A 237-amino-acid polypeptide reads, in one-letter code: Ribosomal RNA small subunit methyltransferase G (237 aa).

S-adenosyl-L-methionine is bound by residues Gly78, Phe83, 129-130 (AE), and Arg148.

Belongs to the methyltransferase superfamily. RNA methyltransferase RsmG family.

It is found in the cytoplasm. In terms of biological role, specifically methylates the N7 position of a guanine in 16S rRNA. The sequence is that of Ribosomal RNA small subunit methyltransferase G from Streptococcus equi subsp. zooepidemicus (strain MGCS10565).